We begin with the raw amino-acid sequence, 157 residues long: Small ribosomal subunit protein uS7 (157 aa).

Belongs to the universal ribosomal protein uS7 family. Part of the 30S ribosomal subunit. Contacts proteins S9 and S11.

One of the primary rRNA binding proteins, it binds directly to 16S rRNA where it nucleates assembly of the head domain of the 30S subunit. Is located at the subunit interface close to the decoding center, probably blocks exit of the E-site tRNA. This Caulobacter sp. (strain K31) protein is Small ribosomal subunit protein uS7.